The following is a 210-amino-acid chain: Thiamine-phosphate synthase (210 aa).

4-amino-2-methyl-5-(diphosphooxymethyl)pyrimidine contacts are provided by residues 39 to 43 (QLREK) and Asn71. 2 residues coordinate Mg(2+): Asp72 and Asp91. Residue Ser110 participates in 4-amino-2-methyl-5-(diphosphooxymethyl)pyrimidine binding. 134-136 (TPT) contacts 2-[(2R,5Z)-2-carboxy-4-methylthiazol-5(2H)-ylidene]ethyl phosphate. Lys137 contacts 4-amino-2-methyl-5-(diphosphooxymethyl)pyrimidine. Residue Gly163 participates in 2-[(2R,5Z)-2-carboxy-4-methylthiazol-5(2H)-ylidene]ethyl phosphate binding.

It belongs to the thiamine-phosphate synthase family. Mg(2+) serves as cofactor.

It catalyses the reaction 2-[(2R,5Z)-2-carboxy-4-methylthiazol-5(2H)-ylidene]ethyl phosphate + 4-amino-2-methyl-5-(diphosphooxymethyl)pyrimidine + 2 H(+) = thiamine phosphate + CO2 + diphosphate. It carries out the reaction 2-(2-carboxy-4-methylthiazol-5-yl)ethyl phosphate + 4-amino-2-methyl-5-(diphosphooxymethyl)pyrimidine + 2 H(+) = thiamine phosphate + CO2 + diphosphate. The enzyme catalyses 4-methyl-5-(2-phosphooxyethyl)-thiazole + 4-amino-2-methyl-5-(diphosphooxymethyl)pyrimidine + H(+) = thiamine phosphate + diphosphate. It participates in cofactor biosynthesis; thiamine diphosphate biosynthesis; thiamine phosphate from 4-amino-2-methyl-5-diphosphomethylpyrimidine and 4-methyl-5-(2-phosphoethyl)-thiazole: step 1/1. Its function is as follows. Condenses 4-methyl-5-(beta-hydroxyethyl)thiazole monophosphate (THZ-P) and 2-methyl-4-amino-5-hydroxymethyl pyrimidine pyrophosphate (HMP-PP) to form thiamine monophosphate (TMP). The sequence is that of Thiamine-phosphate synthase from Campylobacter jejuni subsp. jejuni serotype O:2 (strain ATCC 700819 / NCTC 11168).